The chain runs to 145 residues: MIALIQRVTHASVRVGDEVTGEIGPGLLVLLGVEKDDDEQKANRLCERVLGYRIFSDEQGKMNLNVQQAGGSVLVVSQFTLPADTEKGLRPSFSRGAPPEQAQALYDYFVSRCRAAGMTTETGRFAADMQVSLTNDGPVTFWLQI.

A Gly-cisPro motif, important for rejection of L-amino acids motif is present at residues 137 to 138 (GP).

This sequence belongs to the DTD family. Homodimer.

The protein resides in the cytoplasm. The enzyme catalyses glycyl-tRNA(Ala) + H2O = tRNA(Ala) + glycine + H(+). It catalyses the reaction a D-aminoacyl-tRNA + H2O = a tRNA + a D-alpha-amino acid + H(+). In terms of biological role, an aminoacyl-tRNA editing enzyme that deacylates mischarged D-aminoacyl-tRNAs. Also deacylates mischarged glycyl-tRNA(Ala), protecting cells against glycine mischarging by AlaRS. Acts via tRNA-based rather than protein-based catalysis; rejects L-amino acids rather than detecting D-amino acids in the active site. By recycling D-aminoacyl-tRNA to D-amino acids and free tRNA molecules, this enzyme counteracts the toxicity associated with the formation of D-aminoacyl-tRNA entities in vivo and helps enforce protein L-homochirality. In Cronobacter sakazakii (strain ATCC BAA-894) (Enterobacter sakazakii), this protein is D-aminoacyl-tRNA deacylase.